The following is a 172-amino-acid chain: Large ribosomal subunit protein uL10 (172 aa).

The protein belongs to the universal ribosomal protein uL10 family. As to quaternary structure, part of the ribosomal stalk of the 50S ribosomal subunit. The N-terminus interacts with L11 and the large rRNA to form the base of the stalk. The C-terminus forms an elongated spine to which L12 dimers bind in a sequential fashion forming a multimeric L10(L12)X complex.

Its function is as follows. Forms part of the ribosomal stalk, playing a central role in the interaction of the ribosome with GTP-bound translation factors. This is Large ribosomal subunit protein uL10 from Brucella suis (strain ATCC 23445 / NCTC 10510).